The following is a 392-amino-acid chain: NADH dehydrogenase-like protein YjlD (392 aa).

It belongs to the NADH dehydrogenase family. FAD is required as a cofactor.

The sequence is that of NADH dehydrogenase-like protein YjlD (yjlD) from Bacillus subtilis (strain 168).